The primary structure comprises 93 residues: Acylphosphatase (93 aa).

Cysteines 5 and 49 form a disulfide. Positions 5-93 (CTIAWIYGRV…ETLTDFSIRY (89 aa)) constitute an Acylphosphatase-like domain. Residues R20 and N38 contribute to the active site.

The protein belongs to the acylphosphatase family.

The enzyme catalyses an acyl phosphate + H2O = a carboxylate + phosphate + H(+). This Salmonella arizonae (strain ATCC BAA-731 / CDC346-86 / RSK2980) protein is Acylphosphatase.